The chain runs to 56 residues: Cecropin-A2 (56 aa).

Arginine amide is present on arginine 55.

It belongs to the cecropin family.

The protein localises to the secreted. In terms of biological role, cecropins have lytic and antibacterial activity against several Gram-positive and Gram-negative bacteria. The protein is Cecropin-A2 (CecA2) of Drosophila yakuba (Fruit fly).